The sequence spans 391 residues: E1B 55 kDa protein (391 aa).

S387 bears the Phosphoserine mark.

This sequence belongs to the adenoviridae E1B 55 kDa protein family. As to quaternary structure, interacts with host PML-4 and PML-5; this interaction promotes efficient subnuclear targeting of E1B-55K to PML nuclear bodies. Interacts with E4-ORF3 protein. Interacts with E4-ORF6 protein.

It is found in the host nucleus. The protein resides in the host cytoplasm. Its function is as follows. Plays a major role to prevent cellular inhibition of viral genome replication. Assembles an SCF-like E3 ubiquitin ligase complex based on the cellular proteins ELOB, ELOC, CUL5 and RBX1, in cooperation with viral E4orf6. This viral RING-type ligase ubiquitinates cellular substrates and targets them to proteasomal degradation: TP53/p53, LIG4, MRE11-RAD50-NBS1 (MRN) complex, ITGA3, DAXX and BLM. E1B-55K probably acts as the substrate-specific adapter of the SCF-like E3 ubiquitin ligase complex. Degradation of host TP53/p53 activity is essential for preventing E1A-induced TP53 accumulation that would otherwise lead to cell apoptosis and growth arrest. E1B-55K also inactivates TP53 transcription-factor activity by binding its transactivation domain. E1B-55K also functions as a SUMO1 E3 ligase for TP53 which causes the latter to be sequestered in promyelocytic leukemia (PML) nuclear bodies thereby contributing to maximal inhibition of TP53 function. This is E1B 55 kDa protein from Tree shrew adenovirus serotype 1 (TSAdV-1).